Reading from the N-terminus, the 621-residue chain is Threonine--tRNA ligase (621 aa).

The interval 1-137 (MRILQLHCDS…ESSKVVTKDS (137 aa)) is editing domain. A disordered region spans residues 128-150 (ESSKVVTKDSTTKDDDEDTSDAL). The interval 202 to 501 (PHVALMKKLA…SKKGKKPQLP (300 aa)) is catalytic. Positions 294, 346, and 470 each coordinate Zn(2+). Residues 598–612 (QTSGKPYTGLNQSQH) are compositionally biased toward polar residues. The tract at residues 598–621 (QTSGKPYTGLNQSQHLSKRPQLMV) is disordered.

This sequence belongs to the class-II aminoacyl-tRNA synthetase family. Homodimer. It depends on Zn(2+) as a cofactor.

The protein resides in the cytoplasm. It carries out the reaction tRNA(Thr) + L-threonine + ATP = L-threonyl-tRNA(Thr) + AMP + diphosphate + H(+). In terms of biological role, catalyzes the attachment of threonine to tRNA(Thr) in a two-step reaction: L-threonine is first activated by ATP to form Thr-AMP and then transferred to the acceptor end of tRNA(Thr). Also edits incorrectly charged L-seryl-tRNA(Thr). The chain is Threonine--tRNA ligase from Nitrosopumilus maritimus (strain SCM1).